The sequence spans 480 residues: Aspartyl/glutamyl-tRNA(Asn/Gln) amidotransferase subunit B (480 aa).

Belongs to the GatB/GatE family. GatB subfamily. As to quaternary structure, heterotrimer of A, B and C subunits.

The enzyme catalyses L-glutamyl-tRNA(Gln) + L-glutamine + ATP + H2O = L-glutaminyl-tRNA(Gln) + L-glutamate + ADP + phosphate + H(+). It catalyses the reaction L-aspartyl-tRNA(Asn) + L-glutamine + ATP + H2O = L-asparaginyl-tRNA(Asn) + L-glutamate + ADP + phosphate + 2 H(+). In terms of biological role, allows the formation of correctly charged Asn-tRNA(Asn) or Gln-tRNA(Gln) through the transamidation of misacylated Asp-tRNA(Asn) or Glu-tRNA(Gln) in organisms which lack either or both of asparaginyl-tRNA or glutaminyl-tRNA synthetases. The reaction takes place in the presence of glutamine and ATP through an activated phospho-Asp-tRNA(Asn) or phospho-Glu-tRNA(Gln). This chain is Aspartyl/glutamyl-tRNA(Asn/Gln) amidotransferase subunit B, found in Streptococcus pneumoniae serotype 19F (strain G54).